A 101-amino-acid polypeptide reads, in one-letter code: Peroxisomal biogenesis factor 39 (101 aa).

It is found in the peroxisome. In terms of biological role, may be a peroxin involved in the PTS2-mediated protein import pathway. The protein is Peroxisomal biogenesis factor 39 of Homo sapiens (Human).